We begin with the raw amino-acid sequence, 148 residues long: Probable glycine cleavage system H protein 2 (148 aa).

The Lipoyl-binding domain maps to 32–114 (TIVVGITDLA…YGKGWLVKMK (83 aa)). Position 73 is an N6-lipoyllysine (Lys73).

This sequence belongs to the GcvH family. In terms of assembly, the glycine cleavage system is composed of four proteins: P, T, L and H. It depends on (R)-lipoate as a cofactor.

Functionally, the glycine cleavage system catalyzes the degradation of glycine. The H protein shuttles the methylamine group of glycine from the P protein to the T protein. The chain is Probable glycine cleavage system H protein 2 from Saccharolobus solfataricus (strain ATCC 35092 / DSM 1617 / JCM 11322 / P2) (Sulfolobus solfataricus).